A 611-amino-acid chain; its full sequence is Dihydroxy-acid dehydratase (611 aa).

Asp81 contacts Mg(2+). Residue Cys122 participates in [2Fe-2S] cluster binding. Residues Asp123 and Lys124 each coordinate Mg(2+). N6-carboxylysine is present on Lys124. Residue Cys195 participates in [2Fe-2S] cluster binding. Glu491 provides a ligand contact to Mg(2+). The active-site Proton acceptor is the Ser517.

It belongs to the IlvD/Edd family. In terms of assembly, homodimer. The cofactor is [2Fe-2S] cluster. Mg(2+) is required as a cofactor.

It carries out the reaction (2R)-2,3-dihydroxy-3-methylbutanoate = 3-methyl-2-oxobutanoate + H2O. It catalyses the reaction (2R,3R)-2,3-dihydroxy-3-methylpentanoate = (S)-3-methyl-2-oxopentanoate + H2O. The protein operates within amino-acid biosynthesis; L-isoleucine biosynthesis; L-isoleucine from 2-oxobutanoate: step 3/4. It participates in amino-acid biosynthesis; L-valine biosynthesis; L-valine from pyruvate: step 3/4. Functions in the biosynthesis of branched-chain amino acids. Catalyzes the dehydration of (2R,3R)-2,3-dihydroxy-3-methylpentanoate (2,3-dihydroxy-3-methylvalerate) into 2-oxo-3-methylpentanoate (2-oxo-3-methylvalerate) and of (2R)-2,3-dihydroxy-3-methylbutanoate (2,3-dihydroxyisovalerate) into 2-oxo-3-methylbutanoate (2-oxoisovalerate), the penultimate precursor to L-isoleucine and L-valine, respectively. This Actinobacillus pleuropneumoniae serotype 3 (strain JL03) protein is Dihydroxy-acid dehydratase.